The chain runs to 158 residues: Small ribosomal subunit protein uS10m (158 aa).

This sequence belongs to the universal ribosomal protein uS10 family.

It is found in the mitochondrion. This chain is Small ribosomal subunit protein uS10m (mrps-10), found in Caenorhabditis briggsae.